A 271-amino-acid polypeptide reads, in one-letter code: Imidazole glycerol phosphate synthase subunit HisF (271 aa).

Catalysis depends on residues Asp-12 and Asp-136.

The protein belongs to the HisA/HisF family. Heterodimer of HisH and HisF.

It is found in the cytoplasm. The enzyme catalyses 5-[(5-phospho-1-deoxy-D-ribulos-1-ylimino)methylamino]-1-(5-phospho-beta-D-ribosyl)imidazole-4-carboxamide + L-glutamine = D-erythro-1-(imidazol-4-yl)glycerol 3-phosphate + 5-amino-1-(5-phospho-beta-D-ribosyl)imidazole-4-carboxamide + L-glutamate + H(+). It participates in amino-acid biosynthesis; L-histidine biosynthesis; L-histidine from 5-phospho-alpha-D-ribose 1-diphosphate: step 5/9. IGPS catalyzes the conversion of PRFAR and glutamine to IGP, AICAR and glutamate. The HisF subunit catalyzes the cyclization activity that produces IGP and AICAR from PRFAR using the ammonia provided by the HisH subunit. The protein is Imidazole glycerol phosphate synthase subunit HisF of Natronomonas pharaonis (strain ATCC 35678 / DSM 2160 / CIP 103997 / JCM 8858 / NBRC 14720 / NCIMB 2260 / Gabara) (Halobacterium pharaonis).